The following is a 412-amino-acid chain: Argininosuccinate synthase (412 aa).

Residues 16 to 24 and Ala-44 contribute to the ATP site; that span reads AYSGGLDTS. Residues Tyr-96 and Ser-101 each contribute to the L-citrulline site. Gly-126 is an ATP binding site. L-aspartate-binding residues include Thr-128, Asn-132, and Asp-133. Asn-132 contributes to the L-citrulline binding site. Residues Arg-136, Ser-185, Ser-194, Glu-270, and Tyr-282 each contribute to the L-citrulline site.

Belongs to the argininosuccinate synthase family. Type 1 subfamily. Homotetramer.

The protein localises to the cytoplasm. The catalysed reaction is L-citrulline + L-aspartate + ATP = 2-(N(omega)-L-arginino)succinate + AMP + diphosphate + H(+). Its pathway is amino-acid biosynthesis; L-arginine biosynthesis; L-arginine from L-ornithine and carbamoyl phosphate: step 2/3. The sequence is that of Argininosuccinate synthase from Shewanella baltica (strain OS185).